The following is a 629-amino-acid chain: tRNA uridine 5-carboxymethylaminomethyl modification enzyme MnmG (629 aa).

Gly13–Gly18 is a binding site for FAD. Gly273–Phe287 contributes to the NAD(+) binding site.

It belongs to the MnmG family. In terms of assembly, homodimer. Heterotetramer of two MnmE and two MnmG subunits. The cofactor is FAD.

The protein localises to the cytoplasm. Its function is as follows. NAD-binding protein involved in the addition of a carboxymethylaminomethyl (cmnm) group at the wobble position (U34) of certain tRNAs, forming tRNA-cmnm(5)s(2)U34. The protein is tRNA uridine 5-carboxymethylaminomethyl modification enzyme MnmG of Marinomonas sp. (strain MWYL1).